The sequence spans 320 residues: Lipoyl synthase (320 aa).

Residues C67, C72, C78, C93, C97, C100, and S307 each contribute to the [4Fe-4S] cluster site. Positions 79–296 (FNHGTATFMI…RDKAQAMGFE (218 aa)) constitute a Radical SAM core domain.

Belongs to the radical SAM superfamily. Lipoyl synthase family. [4Fe-4S] cluster is required as a cofactor.

Its subcellular location is the cytoplasm. It carries out the reaction [[Fe-S] cluster scaffold protein carrying a second [4Fe-4S](2+) cluster] + N(6)-octanoyl-L-lysyl-[protein] + 2 oxidized [2Fe-2S]-[ferredoxin] + 2 S-adenosyl-L-methionine + 4 H(+) = [[Fe-S] cluster scaffold protein] + N(6)-[(R)-dihydrolipoyl]-L-lysyl-[protein] + 4 Fe(3+) + 2 hydrogen sulfide + 2 5'-deoxyadenosine + 2 L-methionine + 2 reduced [2Fe-2S]-[ferredoxin]. It functions in the pathway protein modification; protein lipoylation via endogenous pathway; protein N(6)-(lipoyl)lysine from octanoyl-[acyl-carrier-protein]: step 2/2. Catalyzes the radical-mediated insertion of two sulfur atoms into the C-6 and C-8 positions of the octanoyl moiety bound to the lipoyl domains of lipoate-dependent enzymes, thereby converting the octanoylated domains into lipoylated derivatives. The polypeptide is Lipoyl synthase (Pasteurella multocida (strain Pm70)).